The following is a 175-amino-acid chain: uncharacterized protein (175 aa).

Residues 143 to 166 form a helical membrane-spanning segment; the sequence is TCFLFCAFVTSIFIETDYSIFFLL.

The protein localises to the membrane. This is an uncharacterized protein from Saccharomyces cerevisiae (strain ATCC 204508 / S288c) (Baker's yeast).